The following is a 185-amino-acid chain: MSKLLEESLKTCPIVKRGEYHYFIHPISDGVPLVEPELLRDVSTRVIKMIDTDVDKIVTAEAMGIPIVTAVSIATDIPYVIMRKREYLLEGEIPVHQETGYSKGELYLNGINKGDKVIILDDVISTGGTLVAIINALKRAGADIKDVLCIIDRGNGQNIVEEKTGYKVKTIVKIEVVDGKVNILE.

It belongs to the purine/pyrimidine phosphoribosyltransferase family. Archaeal HPRT subfamily. As to quaternary structure, homodimer.

The protein resides in the cytoplasm. It catalyses the reaction IMP + diphosphate = hypoxanthine + 5-phospho-alpha-D-ribose 1-diphosphate. It carries out the reaction GMP + diphosphate = guanine + 5-phospho-alpha-D-ribose 1-diphosphate. It participates in purine metabolism; IMP biosynthesis via salvage pathway; IMP from hypoxanthine: step 1/1. Catalyzes a salvage reaction resulting in the formation of IMP that is energically less costly than de novo synthesis. The polypeptide is Hypoxanthine/guanine phosphoribosyltransferase (hpt) (Methanococcus maripaludis (strain DSM 14266 / JCM 13030 / NBRC 101832 / S2 / LL)).